The primary structure comprises 522 residues: Sulfite reductase [NADPH] flavoprotein alpha-component (522 aa).

The 139-residue stretch at 60–198 folds into the Flavodoxin-like domain; sequence ITILFGSQTG…DTERWSSDAL (139 aa). Positions 217–242 are disordered; it reads TLRSHQDLRSHQEQSRNRARPYDKDN. Over residues 220–242 the composition is skewed to basic and acidic residues; the sequence is SHQDLRSHQEQSRNRARPYDKDN. One can recognise an FAD-binding FR-type domain in the interval 241-399; the sequence is DNPYTATLLE…VAPYRAFLQQ (159 aa).

In terms of assembly, alpha(8)-beta(8). The alpha component is a flavoprotein, the beta component is a hemoprotein. FAD is required as a cofactor. It depends on FMN as a cofactor.

It catalyses the reaction hydrogen sulfide + 3 NADP(+) + 3 H2O = sulfite + 3 NADPH + 4 H(+). Functionally, catalyzes the 6-electron reduction of sulfite to sulfide. This is one of several activities required for the biosynthesis of L-cysteine from sulfate. The flavo-protein component catalyzes the electron flow from NADPH -&gt; FAD -&gt; FMN to the hemoprotein component. This is Sulfite reductase [NADPH] flavoprotein alpha-component (cysJ) from Thiocapsa roseopersicina.